The primary structure comprises 430 residues: Serine--tRNA ligase (430 aa).

237–239 contacts L-serine; it reads TAE. 268 to 270 contacts ATP; the sequence is RSE. Residue Glu-291 participates in L-serine binding. 355–358 lines the ATP pocket; the sequence is EISS. Position 391 (Ser-391) interacts with L-serine.

Belongs to the class-II aminoacyl-tRNA synthetase family. Type-1 seryl-tRNA synthetase subfamily. In terms of assembly, homodimer. The tRNA molecule binds across the dimer.

It localises to the cytoplasm. It catalyses the reaction tRNA(Ser) + L-serine + ATP = L-seryl-tRNA(Ser) + AMP + diphosphate + H(+). The catalysed reaction is tRNA(Sec) + L-serine + ATP = L-seryl-tRNA(Sec) + AMP + diphosphate + H(+). It functions in the pathway aminoacyl-tRNA biosynthesis; selenocysteinyl-tRNA(Sec) biosynthesis; L-seryl-tRNA(Sec) from L-serine and tRNA(Sec): step 1/1. In terms of biological role, catalyzes the attachment of serine to tRNA(Ser). Is also able to aminoacylate tRNA(Sec) with serine, to form the misacylated tRNA L-seryl-tRNA(Sec), which will be further converted into selenocysteinyl-tRNA(Sec). This chain is Serine--tRNA ligase, found in Shigella dysenteriae serotype 1 (strain Sd197).